Reading from the N-terminus, the 412-residue chain is Class E basic helix-loop-helix protein 40 (412 aa).

The tract at residues 1–139 (MERIPSAQPP…LSGRNVETGQ (139 aa)) is essential for interaction with BMAL1, E-box binding and repressor activity against the CLOCK-BMAL1 heterodimer. The region spanning 52–107 (TYKLPHRLIEKKRRDRINECIAQLKDLLPEHLKLTTLGHLEKAVVLELTLKHVKAL) is the bHLH domain. Residues 75-79 (LKDLL) are necessary for interaction with RXRA and repressor activity against RXRA. Positions 142–175 (FCSGFQTCAREVLQYLAKHENTRDLKSSQLVTHL) constitute an Orange domain. Lysine 159 participates in a covalent cross-link: Glycyl lysine isopeptide (Lys-Gly) (interchain with G-Cter in SUMO1, SUMO2 and SUMO3). A Glycyl lysine isopeptide (Lys-Gly) (interchain with G-Cter in SUMO2) cross-link involves residue lysine 167. Disordered stretches follow at residues 183 to 259 (LQGG…SEQL) and 275 to 309 (IGAI…LISS). A Phosphoserine modification is found at serine 235. Residues 248 to 259 (ESEKGDLRSEQL) show a composition bias toward basic and acidic residues. Lysine 279 participates in a covalent cross-link: Glycyl lysine isopeptide (Lys-Gly) (interchain with G-Cter in SUMO1); alternate. Lysine 279 participates in a covalent cross-link: Glycyl lysine isopeptide (Lys-Gly) (interchain with G-Cter in SUMO1, SUMO2 and SUMO3); alternate. A Glycyl lysine isopeptide (Lys-Gly) (interchain with G-Cter in SUMO2); alternate cross-link involves residue lysine 279. Lysine 288 is covalently cross-linked (Glycyl lysine isopeptide (Lys-Gly) (interchain with G-Cter in SUMO2)). Serine 383 bears the Phosphoserine mark.

In terms of assembly, homodimer. Heterodimer with BHLHE41/DEC2. Interacts with TCF3/E47. Interacts with ubiquitin-conjugating enzyme UBE2I/UBC9. Interacts with HDAC1, SUMO1, RXRA and BMAL1. In terms of processing, ubiquitinated; which may lead to proteasomal degradation. Post-translationally, sumoylation inhibits its ubiquitination and promotes its negative regulation of the CLOCK-BMAL1 heterodimer transcriptional activator activity.

It localises to the cytoplasm. The protein resides in the nucleus. Functionally, transcriptional repressor involved in the regulation of the circadian rhythm by negatively regulating the activity of the clock genes and clock-controlled genes. Acts as the negative limb of a novel autoregulatory feedback loop (DEC loop) which differs from the one formed by the PER and CRY transcriptional repressors (PER/CRY loop). Both these loops are interlocked as it represses the expression of PER1/2 and in turn is repressed by PER1/2 and CRY1/2. Represses the activity of the circadian transcriptional activator: CLOCK-BMAL1|BMAL2 heterodimer by competing for the binding to E-box elements (5'-CACGTG-3') found within the promoters of its target genes. Negatively regulates its own expression and the expression of DBP and BHLHE41/DEC2. Acts as a corepressor of RXR and the RXR-LXR heterodimers and represses the ligand-induced RXRA and NR1H3/LXRA transactivation activity. May be involved in the regulation of chondrocyte differentiation via the cAMP pathway. Represses the transcription of NR0B2 and attentuates the transactivation of NR0B2 by the CLOCK-BMAL1 complex. Drives the circadian rhythm of blood pressure through transcriptional repression of ATP1B1 in the cardiovascular system. This chain is Class E basic helix-loop-helix protein 40 (BHLHE40), found in Pongo abelii (Sumatran orangutan).